Here is a 277-residue protein sequence, read N- to C-terminus: Large ribosomal subunit protein uL2 (277 aa).

Disordered stretches follow at residues 32–58 (KSLT…RGGG) and 225–277 (VAMN…RRNK). Basic residues predominate over residues 258–277 (YKTRKKKRYSDKFIIKRRNK).

The protein belongs to the universal ribosomal protein uL2 family. Part of the 50S ribosomal subunit. Forms a bridge to the 30S subunit in the 70S ribosome.

Its function is as follows. One of the primary rRNA binding proteins. Required for association of the 30S and 50S subunits to form the 70S ribosome, for tRNA binding and peptide bond formation. It has been suggested to have peptidyltransferase activity; this is somewhat controversial. Makes several contacts with the 16S rRNA in the 70S ribosome. In Borreliella burgdorferi (strain ATCC 35210 / DSM 4680 / CIP 102532 / B31) (Borrelia burgdorferi), this protein is Large ribosomal subunit protein uL2.